Here is a 636-residue protein sequence, read N- to C-terminus: DNA mismatch repair protein MutL (636 aa).

A disordered region spans residues 341 to 420; the sequence is APLINKPEQQ…PGAEEYTPEA (80 aa). Residues 348-358 show a composition bias toward basic and acidic residues; it reads EQQKLDFDQVR.

This sequence belongs to the DNA mismatch repair MutL/HexB family.

In terms of biological role, this protein is involved in the repair of mismatches in DNA. It is required for dam-dependent methyl-directed DNA mismatch repair. May act as a 'molecular matchmaker', a protein that promotes the formation of a stable complex between two or more DNA-binding proteins in an ATP-dependent manner without itself being part of a final effector complex. This Bacillus licheniformis (strain ATCC 14580 / DSM 13 / JCM 2505 / CCUG 7422 / NBRC 12200 / NCIMB 9375 / NCTC 10341 / NRRL NRS-1264 / Gibson 46) protein is DNA mismatch repair protein MutL.